A 423-amino-acid polypeptide reads, in one-letter code: UPF0229 protein PSPPH_0628 (423 aa).

The disordered stretch occupies residues His65–Met110. The span at Gln92–Gly107 shows a compositional bias: gly residues.

This sequence belongs to the UPF0229 family.

The protein is UPF0229 protein PSPPH_0628 of Pseudomonas savastanoi pv. phaseolicola (strain 1448A / Race 6) (Pseudomonas syringae pv. phaseolicola (strain 1448A / Race 6)).